Reading from the N-terminus, the 228-residue chain is L-ribulose-5-phosphate 4-epimerase UlaF (228 aa).

Residues 26–27 (GN), 43–44 (SG), and 72–73 (SS) each bind substrate. Zn(2+) contacts are provided by D74, H93, and H95. The Proton donor/acceptor role is filled by D118. Position 167 (H167) interacts with Zn(2+). The Proton donor/acceptor role is filled by Y225.

It belongs to the aldolase class II family. AraD/FucA subfamily. Requires Zn(2+) as cofactor.

It catalyses the reaction L-ribulose 5-phosphate = D-xylulose 5-phosphate. The protein operates within cofactor degradation; L-ascorbate degradation; D-xylulose 5-phosphate from L-ascorbate: step 4/4. Functionally, catalyzes the isomerization of L-ribulose 5-phosphate to D-xylulose 5-phosphate. Is involved in the anaerobic L-ascorbate utilization. The protein is L-ribulose-5-phosphate 4-epimerase UlaF of Escherichia coli O139:H28 (strain E24377A / ETEC).